The primary structure comprises 336 residues: MSLDIAQIALHQLIKRDEQTLDMVLRDSLLPTNAAVEDMMAELHRVYSAKSKAYGLFNEQSELADALRACRKGDEDFLSFSRAATGRLRDELAKYPFAEGGIVLFCQYRYLAVEYLLISVLNSCNSMRVNEQLDISTTHYLDINHADIIARIDLTEWETNPESTRYLTFLKGRVGRKVSDFFMDFLAASEGLDTKAQNRGLLKAVDEYCDEAQLDKNERQNYRQQVHSYCTEQLQSGEEIELASLSQELPPLGEKTFQQFSADQGYELEESFPADRGTLRQLTKFAGSGGGISLNFDALLLGERIFWDPATDTLTIKGTPPNLRDQLQRRTSGGKQ.

Positions 317-336 are disordered; the sequence is KGTPPNLRDQLQRRTSGGKQ.

This sequence belongs to the YejK family.

The protein localises to the cytoplasm. It is found in the nucleoid. The protein is Nucleoid-associated protein ECA2747 of Pectobacterium atrosepticum (strain SCRI 1043 / ATCC BAA-672) (Erwinia carotovora subsp. atroseptica).